We begin with the raw amino-acid sequence, 66 residues long: Large ribosomal subunit protein bL31 (66 aa).

Residues Cys-16, Cys-18, Cys-36, and Cys-39 each contribute to the Zn(2+) site.

Belongs to the bacterial ribosomal protein bL31 family. Type A subfamily. As to quaternary structure, part of the 50S ribosomal subunit during exponential growth. Zn(2+) serves as cofactor.

In terms of biological role, binds the 23S rRNA. Its function is as follows. While neither of the L31 paralogs is essential, this protein seems to function as the main L31 protein. Has a lower affinity for 70S ribosomes than the non-zinc-containing paralog L31B (ytiA); is displaced by it to varying extents, even under zinc-replete conditions. In Bacillus subtilis (strain 168), this protein is Large ribosomal subunit protein bL31 (rpmE).